Here is an 842-residue protein sequence, read N- to C-terminus: Oleate activated transcription factor 3 (842 aa).

Residues 22–50 (CTNCKRRKSKCDRQNPCSNCVRFGNKDTC) constitute a DNA-binding region (zn(2)-C6 fungal-type). Positions 55 to 101 (NPKNTESQHGEDTDNKVKKQQPQMIKGKRNGTSSSIVGSKASSISPT) are disordered. Residues 60 to 71 (ESQHGEDTDNKV) show a composition bias toward basic and acidic residues. Positions 87 to 99 (SSSIVGSKASSIS) are enriched in low complexity.

This sequence belongs to the OAF3 family.

The protein localises to the cytoplasm. Its subcellular location is the nucleus. It localises to the mitochondrion. Its function is as follows. Transcriptional inhibitor with a significantly increased number of target genes in response to oleate. The polypeptide is Oleate activated transcription factor 3 (OAF3) (Zygosaccharomyces rouxii (strain ATCC 2623 / CBS 732 / NBRC 1130 / NCYC 568 / NRRL Y-229)).